The following is a 456-amino-acid chain: tRNA modification GTPase MnmE (456 aa).

Positions 23, 85, and 124 each coordinate (6S)-5-formyl-5,6,7,8-tetrahydrofolate. The 156-residue stretch at 220–375 folds into the TrmE-type G domain; the sequence is GLRVLIFGKP…LVSAIQERFV (156 aa). Residue N230 participates in K(+) binding. Residues 230–235, 249–255, and 274–277 contribute to the GTP site; these read NVGKSS, TDIPGTT, and DTAG. Position 234 (S234) interacts with Mg(2+). K(+) contacts are provided by T249, I251, and T254. T255 contributes to the Mg(2+) binding site. (6S)-5-formyl-5,6,7,8-tetrahydrofolate is bound at residue K456.

This sequence belongs to the TRAFAC class TrmE-Era-EngA-EngB-Septin-like GTPase superfamily. TrmE GTPase family. In terms of assembly, homodimer. Heterotetramer of two MnmE and two MnmG subunits. K(+) is required as a cofactor.

The protein localises to the cytoplasm. In terms of biological role, exhibits a very high intrinsic GTPase hydrolysis rate. Involved in the addition of a carboxymethylaminomethyl (cmnm) group at the wobble position (U34) of certain tRNAs, forming tRNA-cmnm(5)s(2)U34. The polypeptide is tRNA modification GTPase MnmE (Syntrophotalea carbinolica (strain DSM 2380 / NBRC 103641 / GraBd1) (Pelobacter carbinolicus)).